A 336-amino-acid chain; its full sequence is DNA repair protein XRCC4 (336 aa).

Residues 1–213 form an interaction with IFFO1 region; sequence MERKISRIHL…EREKDIKQEG (213 aa). Phosphoserine; by PRKDC is present on S53. Coiled-coil stretches lie at residues 131–165 and 184–212; these read LDTI…FEKC and LNEK…IKQE. Residues 180 to 213 are interaction with LIG4; the sequence is FILVLNEKKTKIRSLHNKLLNAAQEREKDIKQEG. Phosphoserine; by PRKDC is present on S193. K210 participates in a covalent cross-link: Glycyl lysine isopeptide (Lys-Gly) (interchain with G-Cter in SUMO). The interval 212–249 is disordered; sequence EGETAICSEMTADRDPVYDESTDEESENQTDLSGLASA. Y229 carries the post-translational modification Phosphotyrosine. Over residues 229 to 239 the composition is skewed to acidic residues; sequence YDESTDEESEN. Position 232 is a phosphoserine (S232). The residue at position 233 (T233) is a Phosphothreonine; by CK2. Phosphoserine occurs at positions 237 and 256. Residue S260 is modified to Phosphoserine; by PRKDC. A disordered region spans residues 264 to 336; it reads TDIAPSRKRR…SSPEDLFDEI (73 aa). Positions 270–275 match the Nuclear localization signal motif; the sequence is RKRRQR. K296 is covalently cross-linked (Glycyl lysine isopeptide (Lys-Gly) (interchain with G-Cter in ubiquitin)). Phosphoserine; by PRKDC is present on residues S303, S304, S315, and S320. Over residues 317-329 the composition is skewed to polar residues; the sequence is ENMSLETLRNSSP. The residue at position 323 (T323) is a Phosphothreonine; by PRKDC. Phosphoserine; by PRKDC occurs at positions 327 and 328.

The protein belongs to the XRCC4-XLF family. XRCC4 subfamily. As to quaternary structure, homodimer and homotetramer in solution. Interacts with NHEJ1/XLF; the interaction is direct and is mediated via a head-to-head interaction between N-terminal head regions. Interacts with LIG4; the LIG4-XRCC4 subcomplex has a 1:2 stoichiometry and XRCC4 is required for LIG4 stability. Component of the core long-range non-homologous end joining (NHEJ) complex (also named DNA-PK complex) composed of PRKDC, LIG4, XRCC4, XRCC6/Ku70, XRCC5/Ku86 and NHEJ1/XLF. Additional component of the NHEJ complex includes PAXX. Following autophosphorylation, PRKDC dissociates from DNA, leading to formation of the short-range NHEJ complex, composed of LIG4, XRCC4, XRCC6/Ku70, XRCC5/Ku86 and NHEJ1/XLF. Interacts with PRKDC; the interaction is direct. Interacts with XRCC6/Ku70; the interaction is direct. Interacts with APTX and APLF. Forms a heterotetramer with IFFO1; the interaction involves LIG4-free XRCC4 and leads to the relocalization of IFFO1 to the sites of DNA damage. Interacts with PNKP; mainly interacts with PNKP when phosphorylated at Thr-233, but is also able to interact at much lower level with PNKP when not unphosphorylated. Interacts with POLL (DNA polymerase lambda). Interacts with XKR4; interacts with the processed form of XKR4, which is cleaved by caspase. Post-translationally, phosphorylated by PRKDC at the C-terminus in response to DNA damage; Ser-260 and Ser-320 constitute the main phosphorylation sites. Phosphorylations by PRKDC at the C-terminus of XRCC4 and NHEJ1/XLF are highly redundant and regulate ability of the XRCC4-NHEJ1/XLF subcomplex to bridge DNA. Phosphorylation by PRKDC does not prevent interaction with NHEJ1/XLF but disrupts ability to bridge DNA and promotes detachment from DNA. Phosphorylation at Ser-327 and Ser-328 by PRKDC promotes recognition by the SCF(FBXW7) complex and subsequent ubiquitination via 'Lys-63'-linked ubiquitin. Phosphorylation at Thr-233 by CK2 promotes interaction with PNKP; regulating PNKP activity and localization to DNA damage sites. Phosphorylation by CK2 promotes interaction with APTX. In terms of processing, ubiquitinated at Lys-296 by the SCF(FBXW7) complex via 'Lys-63'-linked ubiquitination, thereby promoting double-strand break repair: the SCF(FBXW7) complex specifically recognizes XRCC4 when phosphorylated at Ser-327 and Ser-328 by PRKDC, and 'Lys-63'-linked ubiquitination facilitates DNA non-homologous end joining (NHEJ) by enhancing association with XRCC5/Ku80 and XRCC6/Ku70. Monoubiquitinated. Undergoes proteolytic processing by caspase-3 (CASP3). This generates the protein XRCC4, C-terminus (XRCC4/C), which translocates to the cytoplasm and activates phospholipid scramblase activity of XKR4, thereby promoting phosphatidylserine exposure on apoptotic cell surface. Widely expressed.

Its subcellular location is the nucleus. It localises to the chromosome. The protein localises to the cytoplasm. Its function is as follows. DNA non-homologous end joining (NHEJ) core factor, required for double-strand break repair and V(D)J recombination. Acts as a scaffold protein that regulates recruitment of other proteins to DNA double-strand breaks (DSBs). Associates with NHEJ1/XLF to form alternating helical filaments that bridge DNA and act like a bandage, holding together the broken DNA until it is repaired. The XRCC4-NHEJ1/XLF subcomplex binds to the DNA fragments of a DSB in a highly diffusive manner and robustly bridges two independent DNA molecules, holding the broken DNA fragments in close proximity to one other. The mobility of the bridges ensures that the ends remain accessible for further processing by other repair factors. Plays a key role in the NHEJ ligation step of the broken DNA during DSB repair via direct interaction with DNA ligase IV (LIG4): the LIG4-XRCC4 subcomplex reseals the DNA breaks after the gap filling is completed. XRCC4 stabilizes LIG4, regulates its subcellular localization and enhances LIG4's joining activity. Binding of the LIG4-XRCC4 subcomplex to DNA ends is dependent on the assembly of the DNA-dependent protein kinase complex DNA-PK to these DNA ends. Promotes displacement of PNKP from processed strand break termini. Functionally, acts as an activator of the phospholipid scramblase activity of XKR4. This form, which is generated upon caspase-3 (CASP3) cleavage, translocates into the cytoplasm and interacts with XKR4, thereby promoting phosphatidylserine scramblase activity of XKR4 and leading to phosphatidylserine exposure on apoptotic cell surface. This Homo sapiens (Human) protein is DNA repair protein XRCC4.